Reading from the N-terminus, the 444-residue chain is MTTRQPLYKSLYFQVIVAIAIGILLGHFYPQTGVALKPLGDGFIKLIKMVIAPIIFCTVVSGIAGMQNMKSVGKTGGYALLYFEIVSTIALLIGLVVVNVVQPGNGMHIDVSTLDASKVAAYVTAGKDQSIVGFILNVIPNTIVGAFANGDILQVLMFSVIFGFALHRLGAYGKPVLDFIDRFAHVMFNIINMIMKLAPIGALGAMAFTIGAYGVGSLVQLGQLMICFYITCVLFVLVVLGAICRAHGFSVLKLIRYIREELLIVLGTSSSESALPRMLIKMERLGAKKSVVGLVIPTGYSFNLDGTSIYLTMAAVFIAQATDTHMDITHQITLLLVLLLSSKGAAGVTGSGFIVLAATLSAVGHLPVAGLALILGIDRFMSEARALTNLVGNAVATVVVAKWVKELDEDQLQAELASGGRAISDTREEDDLGVAEGPTPTTVK.

8 consecutive transmembrane segments (helical) span residues 7 to 29, 44 to 66, 79 to 101, 143 to 165, 186 to 208, 221 to 243, 291 to 313, and 353 to 375; these read LYKS…GHFY, IKLI…IAGM, ALLY…VNVV, IVGA…FGFA, VMFN…AMAF, LGQL…LGAI, VVGL…YLTM, and FIVL…ALIL. A disordered region spans residues 418–444; it reads SGGRAISDTREEDDLGVAEGPTPTTVK.

Belongs to the dicarboxylate/amino acid:cation symporter (DAACS) (TC 2.A.23) family.

Its subcellular location is the cell inner membrane. Responsible for the transport of dicarboxylates such as succinate, fumarate, and malate from the periplasm across the inner membrane. The chain is C4-dicarboxylate transport protein from Pseudomonas chlororaphis (Pseudomonas aureofaciens).